Consider the following 32-residue polypeptide: Chaperone protein DnaK (32 aa).

It belongs to the heat shock protein 70 family.

Acts as a chaperone. The protein is Chaperone protein DnaK of Anabaena sp. (strain L31).